The following is a 95-amino-acid chain: Co-chaperonin GroES (95 aa).

Belongs to the GroES chaperonin family. In terms of assembly, heptamer of 7 subunits arranged in a ring. Interacts with the chaperonin GroEL.

The protein localises to the cytoplasm. Its function is as follows. Together with the chaperonin GroEL, plays an essential role in assisting protein folding. The GroEL-GroES system forms a nano-cage that allows encapsulation of the non-native substrate proteins and provides a physical environment optimized to promote and accelerate protein folding. GroES binds to the apical surface of the GroEL ring, thereby capping the opening of the GroEL channel. In Ruegeria sp. (strain TM1040) (Silicibacter sp.), this protein is Co-chaperonin GroES.